A 368-amino-acid chain; its full sequence is 3-isopropylmalate dehydrogenase (368 aa).

80–93 contributes to the NAD(+) binding site; that stretch reads GPKWDNLEFSKKPE. 4 residues coordinate substrate: Arg-100, Arg-110, Arg-138, and Asp-229. Residues Asp-229, Asp-253, and Asp-257 each coordinate Mg(2+). 292–304 is an NAD(+) binding site; the sequence is GSAPDIAGKEIAN.

This sequence belongs to the isocitrate and isopropylmalate dehydrogenases family. LeuB type 1 subfamily. In terms of assembly, homodimer. Requires Mg(2+) as cofactor. It depends on Mn(2+) as a cofactor.

The protein localises to the cytoplasm. It catalyses the reaction (2R,3S)-3-isopropylmalate + NAD(+) = 4-methyl-2-oxopentanoate + CO2 + NADH. It functions in the pathway amino-acid biosynthesis; L-leucine biosynthesis; L-leucine from 3-methyl-2-oxobutanoate: step 3/4. Catalyzes the oxidation of 3-carboxy-2-hydroxy-4-methylpentanoate (3-isopropylmalate) to 3-carboxy-4-methyl-2-oxopentanoate. The product decarboxylates to 4-methyl-2 oxopentanoate. This is 3-isopropylmalate dehydrogenase from Pelagibacter ubique (strain HTCC1062).